The sequence spans 476 residues: Adenosylhomocysteinase (476 aa).

The substrate site is built by threonine 67, aspartate 142, and glutamate 202. 203 to 205 (TTT) provides a ligand contact to NAD(+). Substrate contacts are provided by lysine 232 and aspartate 236. Residues asparagine 237, 266–271 (GYGDVG), glutamate 289, asparagine 324, 345–347 (IGH), and asparagine 390 contribute to the NAD(+) site.

This sequence belongs to the adenosylhomocysteinase family. Requires NAD(+) as cofactor.

The protein localises to the cytoplasm. The catalysed reaction is S-adenosyl-L-homocysteine + H2O = L-homocysteine + adenosine. The protein operates within amino-acid biosynthesis; L-homocysteine biosynthesis; L-homocysteine from S-adenosyl-L-homocysteine: step 1/1. Its function is as follows. May play a key role in the regulation of the intracellular concentration of adenosylhomocysteine. The protein is Adenosylhomocysteinase of Prochlorococcus marinus (strain MIT 9313).